Here is a 184-residue protein sequence, read N- to C-terminus: C-phycoerythrin class 1 subunit beta (184 aa).

C50 and C61 together coordinate (2R,3E)-phycoerythrobilin. N72 is subject to N4-methylasparagine. (2R,3E)-phycoerythrobilin is bound by residues C82 and C165.

It belongs to the phycobiliprotein family. In terms of assembly, heterodimer of an alpha and a beta chain. In terms of processing, contains three covalently linked bilin chromophores.

The protein localises to the cellular thylakoid membrane. Light-harvesting photosynthetic bile pigment-protein from the phycobiliprotein complex. This is C-phycoerythrin class 1 subunit beta (cpeB) from Synechococcus sp. (strain WH7803).